We begin with the raw amino-acid sequence, 110 residues long: Eukaryotic translation initiation factor eIF1 (110 aa).

It belongs to the SUI1 family.

Functionally, probably involved in translation. This is Eukaryotic translation initiation factor eIF1 from Anopheles gambiae (African malaria mosquito).